Reading from the N-terminus, the 505-residue chain is T-cell activation inhibitor, mitochondrial (505 aa).

A coiled-coil region spans residues leucine 216–arginine 243.

In terms of tissue distribution, expressed in peripheral blood leukocytes, mainly in T-lymphocytes.

Its subcellular location is the mitochondrion. In terms of biological role, may regulate T-cell apoptosis. This chain is T-cell activation inhibitor, mitochondrial (Tcaim), found in Rattus norvegicus (Rat).